The sequence spans 237 residues: ATP synthase subunit a (237 aa).

The next 6 membrane-spanning stretches (helical) occupy residues 18 to 38 (STLW…VGTL), 77 to 97 (IFTL…PMAF), 103 to 123 (IAVT…LGFM), 132 to 152 (LFWV…IEVI), 185 to 205 (LILF…AIVA), and 209 to 229 (LEIL…CVYL).

The protein belongs to the ATPase A chain family. In terms of assembly, F-type ATPases have 2 components, CF(1) - the catalytic core - and CF(0) - the membrane proton channel. CF(1) has five subunits: alpha(3), beta(3), gamma(1), delta(1), epsilon(1). CF(0) has three main subunits: a(1), b(2) and c(9-12). The alpha and beta chains form an alternating ring which encloses part of the gamma chain. CF(1) is attached to CF(0) by a central stalk formed by the gamma and epsilon chains, while a peripheral stalk is formed by the delta and b chains.

It localises to the cellular chromatophore membrane. Functionally, key component of the proton channel; it plays a direct role in the translocation of protons across the membrane. This chain is ATP synthase subunit a, found in Rhodobacter capsulatus (Rhodopseudomonas capsulata).